A 147-amino-acid polypeptide reads, in one-letter code: Large ribosomal subunit protein uL15 (147 aa).

Belongs to the universal ribosomal protein uL15 family. As to quaternary structure, part of the 50S ribosomal subunit.

Functionally, binds to the 23S rRNA. The polypeptide is Large ribosomal subunit protein uL15 (Blochmanniella floridana).